A 253-amino-acid polypeptide reads, in one-letter code: Probable transcriptional regulatory protein TM_0466 (253 aa).

Belongs to the TACO1 family.

The protein resides in the cytoplasm. This chain is Probable transcriptional regulatory protein TM_0466, found in Thermotoga maritima (strain ATCC 43589 / DSM 3109 / JCM 10099 / NBRC 100826 / MSB8).